The following is a 274-amino-acid chain: uncharacterized protein (274 aa).

The tract at residues 253–274 is disordered; it reads QTGDVRTTEGTALTDDTTKRNI.

This is an uncharacterized protein from Deinococcus radiodurans (strain ATCC 13939 / DSM 20539 / JCM 16871 / CCUG 27074 / LMG 4051 / NBRC 15346 / NCIMB 9279 / VKM B-1422 / R1).